Reading from the N-terminus, the 378-residue chain is Erythronate-4-phosphate dehydrogenase (378 aa).

Residues Ser-45 and Thr-66 each contribute to the substrate site. The NAD(+) site is built by Asp-146 and Thr-175. The active site involves Arg-208. Asp-232 lines the NAD(+) pocket. Residue Glu-237 is part of the active site. Catalysis depends on His-254, which acts as the Proton donor. Position 257 (Gly-257) interacts with NAD(+). Tyr-258 lines the substrate pocket.

It belongs to the D-isomer specific 2-hydroxyacid dehydrogenase family. PdxB subfamily. In terms of assembly, homodimer.

The protein localises to the cytoplasm. It catalyses the reaction 4-phospho-D-erythronate + NAD(+) = (R)-3-hydroxy-2-oxo-4-phosphooxybutanoate + NADH + H(+). The protein operates within cofactor biosynthesis; pyridoxine 5'-phosphate biosynthesis; pyridoxine 5'-phosphate from D-erythrose 4-phosphate: step 2/5. In terms of biological role, catalyzes the oxidation of erythronate-4-phosphate to 3-hydroxy-2-oxo-4-phosphonooxybutanoate. The sequence is that of Erythronate-4-phosphate dehydrogenase from Klebsiella pneumoniae (strain 342).